Consider the following 356-residue polypeptide: tRNA N6-adenosine threonylcarbamoyltransferase (356 aa).

Residues His115 and His119 each contribute to the Fe cation site. Substrate contacts are provided by residues Leu139 to Gly143, Asp173, Gly186, Asp190, and Asn291. Residue Asp319 participates in Fe cation binding.

The protein belongs to the KAE1 / TsaD family. The cofactor is Fe(2+).

It is found in the cytoplasm. The enzyme catalyses L-threonylcarbamoyladenylate + adenosine(37) in tRNA = N(6)-L-threonylcarbamoyladenosine(37) in tRNA + AMP + H(+). In terms of biological role, required for the formation of a threonylcarbamoyl group on adenosine at position 37 (t(6)A37) in tRNAs that read codons beginning with adenine. Is involved in the transfer of the threonylcarbamoyl moiety of threonylcarbamoyl-AMP (TC-AMP) to the N6 group of A37, together with TsaE and TsaB. TsaD likely plays a direct catalytic role in this reaction. The polypeptide is tRNA N6-adenosine threonylcarbamoyltransferase (Arthrobacter sp. (strain FB24)).